A 203-amino-acid polypeptide reads, in one-letter code: Recombination protein RecR (203 aa).

The C4-type zinc finger occupies 56 to 71; it reads CSVCGNVSDEERCRIC. A Toprim domain is found at 79-179; sequence SLVCVVEEPK…TVTRIASGLP (101 aa).

Belongs to the RecR family.

In terms of biological role, may play a role in DNA repair. It seems to be involved in an RecBC-independent recombinational process of DNA repair. It may act with RecF and RecO. The sequence is that of Recombination protein RecR from Mycolicibacterium smegmatis (strain ATCC 700084 / mc(2)155) (Mycobacterium smegmatis).